Reading from the N-terminus, the 229-residue chain is Flagellar L-ring protein (229 aa).

The N-terminal stretch at 1–25 (MKQVRLLPSAAVRAACALAAAALAG) is a signal peptide. Cysteine 26 carries N-palmitoyl cysteine lipidation. Cysteine 26 carries S-diacylglycerol cysteine lipidation.

This sequence belongs to the FlgH family. In terms of assembly, the basal body constitutes a major portion of the flagellar organelle and consists of four rings (L,P,S, and M) mounted on a central rod.

The protein resides in the cell outer membrane. Its subcellular location is the bacterial flagellum basal body. Functionally, assembles around the rod to form the L-ring and probably protects the motor/basal body from shearing forces during rotation. The sequence is that of Flagellar L-ring protein from Burkholderia multivorans (strain ATCC 17616 / 249).